The primary structure comprises 321 residues: Probable arabinan endo-1,5-alpha-L-arabinosidase A (321 aa).

Positions 1-19 are cleaved as a signal peptide; sequence MSASAFVAVASCLAALVHG. Residue D34 is the Proton acceptor of the active site. E200 serves as the catalytic Proton donor.

It belongs to the glycosyl hydrolase 43 family.

The protein resides in the secreted. It catalyses the reaction Endohydrolysis of (1-&gt;5)-alpha-arabinofuranosidic linkages in (1-&gt;5)-arabinans.. Its pathway is glycan metabolism; L-arabinan degradation. Functionally, endo-1,5-alpha-L-arabinanase involved in degradation of pectin. Its preferred substrate is linear 1,5-alpha-L-arabinan. This chain is Probable arabinan endo-1,5-alpha-L-arabinosidase A (abnA), found in Neosartorya fischeri (strain ATCC 1020 / DSM 3700 / CBS 544.65 / FGSC A1164 / JCM 1740 / NRRL 181 / WB 181) (Aspergillus fischerianus).